Consider the following 31-residue polypeptide: Cyclotide cter-C (31 aa).

A cross-link (cyclopeptide (Gly-Asp)) is located at residues 1–31 (GVPCAESCVWIPCTVTALLGCSCKDKVCYLD). Intrachain disulfides connect C4/C21, C8/C23, and C13/C28.

In terms of processing, contains 3 disulfide bonds. Post-translationally, this is a cyclic peptide.

Functionally, probably participates in a plant defense mechanism. This chain is Cyclotide cter-C, found in Clitoria ternatea (Butterfly pea).